Reading from the N-terminus, the 169-residue chain is Ribosome maturation factor RimP (169 aa).

This sequence belongs to the RimP family.

Its subcellular location is the cytoplasm. Functionally, required for maturation of 30S ribosomal subunits. The protein is Ribosome maturation factor RimP of Pseudomonas putida (strain ATCC 700007 / DSM 6899 / JCM 31910 / BCRC 17059 / LMG 24140 / F1).